A 425-amino-acid polypeptide reads, in one-letter code: uncharacterized protein (425 aa).

This is an uncharacterized protein from Acidianus sp. F28 (AFV-2).